The primary structure comprises 100 residues: Flagellar transcriptional regulator FlhD (100 aa).

This sequence belongs to the FlhD family. As to quaternary structure, homodimer; disulfide-linked. Forms a heterohexamer composed of two FlhC and four FlhD subunits. Each FlhC binds a FlhD dimer, forming a heterotrimer, and a hexamer assembles by dimerization of two heterotrimers.

The protein resides in the cytoplasm. Functions in complex with FlhC as a master transcriptional regulator that regulates transcription of several flagellar and non-flagellar operons by binding to their promoter region. Activates expression of class 2 flagellar genes, including fliA, which is a flagellum-specific sigma factor that turns on the class 3 genes. Also regulates genes whose products function in a variety of physiological pathways. This chain is Flagellar transcriptional regulator FlhD, found in Ralstonia pickettii (strain 12D).